The chain runs to 286 residues: L-cysteine S-thiosulfotransferase subunit SoxA (286 aa).

The signal sequence occupies residues 1-28 (MKKTIQRGLFTGALVLLTAMTSKPAHAA). Cysteine 106 and cysteine 137 are joined by a disulfide. Positions 180 to 286 (DAYMKGKEMF…LKFNGPASRK (107 aa)) constitute a Cytochrome c domain. Residues cysteine 200 and histidine 204 each coordinate heme. Arginine 243 is a substrate binding site. Cysteine 247 contributes to the heme binding site. The active-site Cysteine persulfide intermediate is the cysteine 247.

The protein belongs to the SoxA family. In terms of assembly, heterodimer of SoxA and SoxX. The SoxAX complex interacts with CT1020, SoxAX-binding protein SaxB (SoxK); this interaction stimulates catalytic activity of the complex. Heme is required as a cofactor. In terms of processing, cysteine persulfide at Cys-247.

The protein resides in the periplasm. It carries out the reaction L-cysteinyl-[SoxY protein] + thiosulfate + 2 Fe(III)-[cytochrome c] = S-sulfosulfanyl-L-cysteinyl-[SoxY protein] + 2 Fe(II)-[cytochrome c] + 2 H(+). The catalysed reaction is S-sulfanyl-L-cysteinyl-[SoxY protein] + thiosulfate + 2 Fe(III)-[cytochrome c] = S-(2-sulfodisulfanyl)-L-cysteinyl-[SoxY protein] + 2 Fe(II)-[cytochrome c] + 2 H(+). C-type monoheme cytochrome, which is part of the SoxAX cytochrome complex involved in sulfur oxidation. The SoxAX complex catalyzes the formation of a heterodisulfide bond between the conserved cysteine residue on a sulfur carrier SoxYZ complex subunit SoxY and thiosulfate or other inorganic sulfur substrates. This leads to the liberation of two electrons, which may be transferred from the SoxAX complex to another cytochrome c and which then may be used for reductive CO(2) fixation. This is L-cysteine S-thiosulfotransferase subunit SoxA from Chlorobaculum thiosulfatiphilum (Chlorobium limicola f.sp. thiosulfatophilum).